Consider the following 290-residue polypeptide: Serine protease 27 (290 aa).

An N-terminal signal peptide occupies residues 1–22 (MRRPAAVPLLLLLCFGSQRAKA). A propeptide spans 23–34 (ATACGRPRMLNR) (activation peptide). In terms of domain architecture, Peptidase S1 spans 35–277 (MVGGQDTQEG…HHNWIHRIIP (243 aa)). Asn55 is a glycosylation site (N-linked (GlcNAc...) asparagine). A disulfide bond links Cys60 and Cys76. His75 serves as the catalytic Charge relay system. An N-linked (GlcNAc...) asparagine glycan is attached at Asn79. The active-site Charge relay system is the Asp124. Intrachain disulfides connect Cys158–Cys235, Cys191–Cys214, and Cys225–Cys253. Ser229 acts as the Charge relay system in catalysis.

This sequence belongs to the peptidase S1 family. N-glycosylated. As to expression, expressed predominantly in the pancreas.

The protein resides in the secreted. This is Serine protease 27 (PRSS27) from Homo sapiens (Human).